A 1416-amino-acid polypeptide reads, in one-letter code: DNA-directed RNA polymerase subunit beta (1416 aa).

The protein belongs to the RNA polymerase beta chain family. In terms of assembly, in plastids the minimal PEP RNA polymerase catalytic core is composed of four subunits: alpha, beta, beta', and beta''. When a (nuclear-encoded) sigma factor is associated with the core the holoenzyme is formed, which can initiate transcription.

Its subcellular location is the plastid. The protein localises to the chloroplast. The catalysed reaction is RNA(n) + a ribonucleoside 5'-triphosphate = RNA(n+1) + diphosphate. DNA-dependent RNA polymerase catalyzes the transcription of DNA into RNA using the four ribonucleoside triphosphates as substrates. In Oltmannsiellopsis viridis (Marine flagellate), this protein is DNA-directed RNA polymerase subunit beta.